The sequence spans 381 residues: cAMP-dependent protein kinase type I-beta regulatory subunit (381 aa).

The segment at 1–136 (MASPSCFHSE…ALAKAISKNV (136 aa)) is dimerization and phosphorylation. Phosphoserine is present on Ser3. A 3'-nitrotyrosine modification is found at Tyr21. Residues 66-88 (LARQKSNSQCDSHDEEISPTPPN) are disordered. Ser77 and Ser83 each carry phosphoserine. Thr85 is subject to Phosphothreonine. Residues 96–100 (RRGGV) carry the Pseudophosphorylation motif motif. An Omega-N-methylarginine modification is found at Arg97. 3',5'-cyclic AMP is bound by residues 137–254 (LFSH…SKVS), Glu202, Arg211, 255–381 (ILES…SLTV), Glu326, and Arg335.

Belongs to the cAMP-dependent kinase regulatory chain family. In terms of assembly, the inactive holoenzyme is composed of two regulatory chains and two catalytic chains. Activation by cAMP releases the two active catalytic monomers and the regulatory dimer. Interacts with PRKX; regulates this cAMP-dependent protein kinase. Interacts with smAKAP; this interaction may target PRKAR1B to the plasma membrane. Post-translationally, the pseudophosphorylation site binds to the substrate-binding region of the catalytic chain, resulting in the inhibition of its activity. Abundant in brain and testis. No expression in lung, heart, liver, spleen, kidney and skeletal muscle.

Its subcellular location is the cell membrane. In terms of biological role, regulatory subunit of the cAMP-dependent protein kinases involved in cAMP signaling in cells. In Rattus norvegicus (Rat), this protein is cAMP-dependent protein kinase type I-beta regulatory subunit (Prkar1b).